The chain runs to 313 residues: Pyrimidine-specific ribonucleoside hydrolase RihB (313 aa).

Asp11 (proton acceptor) is an active-site residue. The Ca(2+) site is built by Asp11, Asp16, and Val124. Gln227 and His239 together coordinate substrate. Asp240 provides a ligand contact to Ca(2+).

This sequence belongs to the IUNH family. RihB subfamily. As to quaternary structure, homotetramer. The cofactor is Ca(2+).

The catalysed reaction is a pyrimidine ribonucleoside + H2O = a pyrimidine nucleobase + D-ribose. Its function is as follows. Hydrolyzes cytidine or uridine to ribose and cytosine or uracil, respectively. Has a clear preference for cytidine over uridine. Strictly specific for ribonucleosides. The protein is Pyrimidine-specific ribonucleoside hydrolase RihB of Shigella sonnei (strain Ss046).